Consider the following 360-residue polypeptide: Pyrimidine monooxygenase RutA (360 aa).

Residues 49–50 (IK), Asn115, Glu124, 140–141 (RY), and Ser190 contribute to the FMN site.

This sequence belongs to the NtaA/SnaA/DszA monooxygenase family. RutA subfamily.

It catalyses the reaction uracil + FMNH2 + NADH + O2 = (Z)-3-ureidoacrylate + FMN + NAD(+) + H2O + H(+). The catalysed reaction is thymine + FMNH2 + NADH + O2 = (Z)-2-methylureidoacrylate + FMN + NAD(+) + H2O + H(+). Its function is as follows. Catalyzes the pyrimidine ring opening between N-3 and C-4 by an unusual flavin hydroperoxide-catalyzed mechanism, adding oxygen atoms in the process to yield ureidoacrylate peracid, that immediately reacts with FMN forming ureidoacrylate and FMN-N(5)-oxide. The FMN-N(5)-oxide reacts spontaneously with NADH to produce FMN. Requires the flavin reductase RutF to regenerate FMN in vivo. In Bradyrhizobium sp. (strain BTAi1 / ATCC BAA-1182), this protein is Pyrimidine monooxygenase RutA.